Here is a 325-residue protein sequence, read N- to C-terminus: Malate dehydrogenase (325 aa).

An NAD(+)-binding site is contributed by 9–15 (GAAGAIG). Arg90 and Arg96 together coordinate substrate. NAD(+)-binding positions include Asn103, Gln110, and 127–129 (VGN). Substrate contacts are provided by Asn129 and Arg160. His185 acts as the Proton acceptor in catalysis.

It belongs to the LDH/MDH superfamily. MDH type 2 family.

It catalyses the reaction (S)-malate + NAD(+) = oxaloacetate + NADH + H(+). Its function is as follows. Catalyzes the reversible oxidation of malate to oxaloacetate. This is Malate dehydrogenase from Rubrobacter xylanophilus (strain DSM 9941 / JCM 11954 / NBRC 16129 / PRD-1).